The primary structure comprises 240 residues: Ribonuclease P protein component (240 aa).

The disordered stretch occupies residues 1-140; the sequence is MDEKDLATQQ…KKAGGKGLVS (140 aa). Residues 40–51 show a composition bias toward pro residues; that stretch reads APPPHRVIPPHP. Residues 47-123 form an insert region; it reads IPPHPGLRQD…PGPDRDGGSK (77 aa). Low complexity predominate over residues 122–132; the sequence is SKASRASSPKK.

The protein belongs to the RnpA family. In terms of assembly, consists of a catalytic RNA component (M1 or rnpB) and a protein subunit.

It catalyses the reaction Endonucleolytic cleavage of RNA, removing 5'-extranucleotides from tRNA precursor.. Functionally, RNaseP catalyzes the removal of the 5'-leader sequence from pre-tRNA to produce the mature 5'-terminus. It can also cleave other RNA substrates such as 4.5S RNA. The protein component plays an auxiliary but essential role in vivo by binding to the 5'-leader sequence and broadening the substrate specificity of the ribozyme. This is Ribonuclease P protein component from Thermus filiformis.